A 194-amino-acid chain; its full sequence is Phosphoheptose isomerase (194 aa).

An SIS domain is found at 34 to 188 (LANIFTKGKK…IEGVERIMFP (155 aa)). Residue 49 to 51 (NGG) participates in substrate binding. Positions 58 and 62 each coordinate Zn(2+). Residues E62, 90 to 91 (ND), 116 to 118 (STS), S121, and Q168 each bind substrate. Residues Q168 and H176 each coordinate Zn(2+).

It belongs to the SIS family. GmhA subfamily. Requires Zn(2+) as cofactor.

Its subcellular location is the cytoplasm. The enzyme catalyses 2 D-sedoheptulose 7-phosphate = D-glycero-alpha-D-manno-heptose 7-phosphate + D-glycero-beta-D-manno-heptose 7-phosphate. Its pathway is carbohydrate biosynthesis; D-glycero-D-manno-heptose 7-phosphate biosynthesis; D-glycero-alpha-D-manno-heptose 7-phosphate and D-glycero-beta-D-manno-heptose 7-phosphate from sedoheptulose 7-phosphate: step 1/1. Functionally, catalyzes the isomerization of sedoheptulose 7-phosphate in D-glycero-D-manno-heptose 7-phosphate. The polypeptide is Phosphoheptose isomerase (Fusobacterium nucleatum subsp. nucleatum (strain ATCC 25586 / DSM 15643 / BCRC 10681 / CIP 101130 / JCM 8532 / KCTC 2640 / LMG 13131 / VPI 4355)).